Reading from the N-terminus, the 419-residue chain is D(4) dopamine receptor (419 aa).

The Extracellular portion of the chain corresponds to 1–29 (MGNRSTADADGLLAGRGPAAGASAGASAG). The N-linked (GlcNAc...) asparagine glycan is linked to asparagine 3. The helical transmembrane segment at 30 to 50 (LAGQGAAALVGGVLLIGAVLA) threads the bilayer. Residues 51 to 71 (GNSLVCVSVATERALQTPTNS) are Cytoplasmic-facing. Residues 72-92 (FIVSLAAADLLLALLVLPLFV) form a helical membrane-spanning segment. Residue aspartate 80 coordinates Na(+). At 93–110 (YSEVQGGAWLLSPRLCDA) the chain is on the extracellular side. Cysteine 108 and cysteine 185 are oxidised to a cystine. Residues 111-131 (LMAMDVMLCTASIFNLCAISV) form a helical membrane-spanning segment. (2R,3R)-nemonapride is bound at residue aspartate 115. Residue serine 122 coordinates Na(+). Topologically, residues 132–152 (DRFVAVAVPLRYNRQGGSRRQ) are cytoplasmic. Residues 153 to 173 (LLLIGATWLLSAAVAAPVLCG) traverse the membrane as a helical segment. At 174 to 192 (LNDVRGRDPAVCRLEDRDY) the chain is on the extracellular side. A helical transmembrane segment spans residues 193 to 213 (VVYSSVCSFFLPCPLMLLLYW). Serine 196 contributes to the (2R,3R)-nemonapride binding site. The Cytoplasmic portion of the chain corresponds to 214-346 (ATFRGLQRWE…ITGRERKAMR (133 aa)). The interval 230–264 (LHGRAPRRPSGPGPPSPTPPAPRLPQDPCGPDCAP) is disordered. Residues 238–254 (PSGPGPPSPTPPAPRLP) show a composition bias toward pro residues. A 1; approximate repeat occupies 249–264 (PAPRLPQDPCGPDCAP). Residues 249–312 (PAPRLPQDPC…PDPCGSNCAP (64 aa)) are 4 X 16 AA approximate tandem repeats of [PA]-A-P-G-L-P-[PQR]-[DG]-P-C-G-P-D-C-A-P. Repeat copies occupy residues 265–280 (PAPG…DCAP) and 281–296 (AAPS…DCAP). The 4; approximate repeat unit spans residues 297-312 (PAPGLPPDPCGSNCAP). Positions 317-336 (RAAALPPQTPPQTRRRRRAK) are disordered. The chain crosses the membrane as a helical span at residues 347 to 367 (VLPVVVGAFLLCWTPFFVVHI). Topologically, residues 368 to 382 (TQALCPACSVPPRLV) are extracellular. An intrachain disulfide couples cysteine 372 to cysteine 375. A helical membrane pass occupies residues 383-403 (SAVTWLGYVNSALNPVIYTVF). At 404–419 (NAEFRNVFRKALRACC) the chain is on the cytoplasmic side. A lipid anchor (S-palmitoyl cysteine) is attached at cysteine 419.

It belongs to the G-protein coupled receptor 1 family. In terms of assembly, forms homo- and heterooligomers with DRD2. D4.7 allele exhibits higher affinity for homodimers compared to DRD2 heterodimers, while alleles D42. and 4.4 have similar affinities for both. The interaction with DRD2 may modulate agonist-induced downstream signaling. Interacts with CLIC6. Interacts with GPRASP1. May interact with ADORA2A. Interacts with KLHL12. Polyubiquitinated by the BCR(KLHL12) E3 ubiquitin ligase complex: polyubiquitination does not lead to degradation of DRD4 protein. Post-translationally, palmitoylated. Palmitoylation of the C-terminal Cys is important for normal expression at the cell membrane. Highly expressed in retina. Detected at much lower levels in brain, in amygdala, thalamus, hypothalamus, cerebellum and pituitary.

The protein localises to the cell membrane. Signaling in response to agonists such as dopamine, epinephrine and norepinephrine is modulated by Na(+); lower Na(+) levels result in higher receptor activity (in vitro). Its function is as follows. Dopamine receptor responsible for neuronal signaling in the mesolimbic system of the brain, an area of the brain that regulates emotion and complex behavior. Activated by dopamine, but also by epinephrine and norepinephrine, and by numerous synthetic agonists and drugs. Agonist binding triggers signaling via G proteins that inhibit adenylyl cyclase. Modulates the circadian rhythm of contrast sensitivity by regulating the rhythmic expression of NPAS2 in the retinal ganglion cells. In Homo sapiens (Human), this protein is D(4) dopamine receptor (DRD4).